Consider the following 436-residue polypeptide: Glutamyl-tRNA reductase (436 aa).

Residues 49–52 (TCNR), serine 109, 114–116 (EGQ), and glutamine 120 each bind substrate. Cysteine 50 functions as the Nucleophile in the catalytic mechanism. 198 to 203 (GAGRMS) lines the NADP(+) pocket.

It belongs to the glutamyl-tRNA reductase family. Homodimer.

The enzyme catalyses (S)-4-amino-5-oxopentanoate + tRNA(Glu) + NADP(+) = L-glutamyl-tRNA(Glu) + NADPH + H(+). It functions in the pathway porphyrin-containing compound metabolism; protoporphyrin-IX biosynthesis; 5-aminolevulinate from L-glutamyl-tRNA(Glu): step 1/2. Its pathway is porphyrin-containing compound metabolism; chlorophyll biosynthesis. Its function is as follows. Catalyzes the NADPH-dependent reduction of glutamyl-tRNA(Glu) to glutamate 1-semialdehyde (GSA). The polypeptide is Glutamyl-tRNA reductase (Prochlorococcus marinus (strain MIT 9312)).